Consider the following 363-residue polypeptide: RNA polymerase I-specific transcription initiation factor RRN5 (363 aa).

The tract at residues 301–344 (LSRRDAPPVHQDENQENQENQENQEQDNTASEGESEAERDEIDE) is disordered. The segment covering 302–313 (SRRDAPPVHQDE) has biased composition (basic and acidic residues). Residues 317-328 (NQENQENQEQDN) are compositionally biased toward low complexity. Positions 333–344 (GESEAERDEIDE) are enriched in acidic residues.

As to quaternary structure, component of the UAF (upstream activation factor) complex which consists of UAF30, RRN5, RRN9, RRN10, and histones H3 and H4.

Its subcellular location is the nucleus. The protein resides in the nucleolus. In terms of biological role, component of the UAF (upstream activation factor) complex which interacts with the upstream element of the RNA polymerase I promoter and forms a stable preinitiation complex. Together with SPT15/TBP UAF seems to stimulate basal transcription to a fully activated level. This chain is RNA polymerase I-specific transcription initiation factor RRN5 (RRN5), found in Saccharomyces cerevisiae (strain ATCC 204508 / S288c) (Baker's yeast).